Here is a 536-residue protein sequence, read N- to C-terminus: Allene oxide synthase, chloroplastic (536 aa).

Residues 1 to 58 constitute a chloroplast transit peptide; sequence MASSALNNLVAVNPNTLSPSPKSTPLPNTFSNLRRVSAFRPIKASLFGDSPIKIPGIT. Heme b-binding residues include K151, H182, and K186. Residues S262, N339, and K345 each contribute to the (13S)-hydroperoxy-(9Z,11E)-octadecadienoate site. Residue N339 participates in (13S)-hydroperoxy-(9Z,11E,15Z)-octadecatrienoate binding. 2 residues coordinate heme b: K487 and C489.

The protein belongs to the cytochrome P450 family. Heme b serves as cofactor.

It localises to the plastid. The protein localises to the chloroplast. The enzyme catalyses (13S)-hydroperoxy-(9Z,11E,15Z)-octadecatrienoate = (9Z,13S,15Z)-12,13-epoxyoctadeca-9,11,15-trienoate + H2O. It catalyses the reaction (13S)-hydroperoxy-(9Z,11E)-octadecadienoate = (9Z,13S)-12,13-epoxyoctadeca-9,11-dienoate + H2O. It participates in lipid metabolism; oxylipin biosynthesis. Functionally, cytochrome P450 enzyme involved in the biosynthesis of oxylipin jasmonates, important phytohormones acting as growth regulators and signaling molecules for plant defense. Functions as an allene oxide synthase that converts hydroperoxy fatty acids to unstable allene epoxides. Catalyzes the dehydration of 13-HPOTE ((13S)-hydroperoxy-(9Z,11E,15Z)-octadecatrienoate), as well as 13-HPODE ((13S)-hydroperoxy-(9Z,11E)-octadecadienoate). The chain is Allene oxide synthase, chloroplastic (CYP74A) from Linum usitatissimum (Flax).